Consider the following 175-residue polypeptide: Large ribosomal subunit protein uL10 (175 aa).

It belongs to the universal ribosomal protein uL10 family. As to quaternary structure, part of the ribosomal stalk of the 50S ribosomal subunit. The N-terminus interacts with L11 and the large rRNA to form the base of the stalk. The C-terminus forms an elongated spine to which L12 dimers bind in a sequential fashion forming a multimeric L10(L12)X complex.

Forms part of the ribosomal stalk, playing a central role in the interaction of the ribosome with GTP-bound translation factors. This Methylobacterium nodulans (strain LMG 21967 / CNCM I-2342 / ORS 2060) protein is Large ribosomal subunit protein uL10.